The sequence spans 544 residues: Nucleosome assembly protein 1-like 3 (544 aa).

Disordered regions lie at residues 1 to 109 (MAEA…LFLD) and 168 to 345 (PTEE…KKED). Residues 35-83 (SNSSSSTNSCSSSGSSSSGSSSSSSSSSSSSSSSSSSSSGSSGSSSNGS) are compositionally biased toward low complexity. The span at 168–192 (PTEEECEWNSEEEFSGDEEMQDDTP) shows a compositional bias: acidic residues. 3 stretches are compositionally biased toward basic and acidic residues: residues 207–228 (CNEK…PEAK), 235–277 (PKET…KADS), and 314–332 (PARE…EGVN).

It belongs to the nucleosome assembly protein (NAP) family. As to expression, expressed in brain.

The protein resides in the nucleus. The protein localises to the cytoplasm. This chain is Nucleosome assembly protein 1-like 3 (Nap1l3), found in Mus musculus (Mouse).